Here is a 692-residue protein sequence, read N- to C-terminus: MAIERITDNKFELVSKYEPAGDQGEAIAELVDNIENGEKAQILRGATGTGKTYTMSQVIARTGKPTLVMAHNKTLAGQLYSEFKEFFPNNAVEYFVSYYDYYQPEAYVPSSDTYIEKDSSVNDEIDKLRHSATSSLLERNDVIVVASVSCIYGLGSPKEYQDSVVSLRPGQEISRDQLLNDLVGIQFERNDIDFQRGCFRVRGDVVEVFPASRDEHAFRVEFFGDEIDRIREIEVLTGQVLGEVDHLAIFPATHFMTNDDRMEESIAKIEAELEEQLKVFRSEGKLLEAQRLEQRTNYDIEMLREMGYCNGVENYSRHMDGREEGEPPYTLLDFFPDDFMIMIDESHMTMGQVKGMYNGDRARKEMLCNYGFRLPSALDNRPLKREEFESHVHQIVYVSATPGDYEMEQTDTIVEQIIRPTGLLDPVVEVRPMMGQIDDLVGEIHKRAEKNERVFVTTLTKKMSEDLTAYFKEMGIKVKYMHSDIKTLERTEIIRDLRLGVFDVLVGINLLREGIDVPEVSLVAILDADKEGFLRNERGLIQTIGRAARNSEGHVILYSDMAKALDENDPVDKEILDSGYYTEYEGQKYKITRSMKHAMDETARRREIQMAYNEEHGITPQTIKKEIRDLIAITKKTDSGEIEEVDASAMTKKERKALVKKLEKEMQQAASALDFEGAAQLRDMVLELRAMD.

Positions Asp-32–Ile-418 constitute a Helicase ATP-binding domain. Gly-45–Thr-52 is an ATP binding site. The short motif at Tyr-98 to Val-121 is the Beta-hairpin element. The region spanning Gln-436–Ile-631 is the Helicase C-terminal domain. The UVR domain occupies Lys-656–Met-691.

Belongs to the UvrB family. As to quaternary structure, forms a heterotetramer with UvrA during the search for lesions. Interacts with UvrC in an incision complex.

Its subcellular location is the cytoplasm. Functionally, the UvrABC repair system catalyzes the recognition and processing of DNA lesions. A damage recognition complex composed of 2 UvrA and 2 UvrB subunits scans DNA for abnormalities. Upon binding of the UvrA(2)B(2) complex to a putative damaged site, the DNA wraps around one UvrB monomer. DNA wrap is dependent on ATP binding by UvrB and probably causes local melting of the DNA helix, facilitating insertion of UvrB beta-hairpin between the DNA strands. Then UvrB probes one DNA strand for the presence of a lesion. If a lesion is found the UvrA subunits dissociate and the UvrB-DNA preincision complex is formed. This complex is subsequently bound by UvrC and the second UvrB is released. If no lesion is found, the DNA wraps around the other UvrB subunit that will check the other stand for damage. This Lactococcus lactis subsp. lactis (strain IL1403) (Streptococcus lactis) protein is UvrABC system protein B.